A 132-amino-acid polypeptide reads, in one-letter code: Small ribosomal subunit protein uS8 (132 aa).

It belongs to the universal ribosomal protein uS8 family. As to quaternary structure, part of the 30S ribosomal subunit. Contacts proteins S5 and S12.

Its function is as follows. One of the primary rRNA binding proteins, it binds directly to 16S rRNA central domain where it helps coordinate assembly of the platform of the 30S subunit. In Borreliella burgdorferi (strain ZS7) (Borrelia burgdorferi), this protein is Small ribosomal subunit protein uS8.